The sequence spans 957 residues: Receptor-like protein 34 (957 aa).

The N-terminal stretch at 1–31 is a signal peptide; it reads MKGSWVVSTSIIRITLSFTFLFICHFSDVLA. Topologically, residues 32–910 are extracellular; it reads APTRHLCRPE…EEEDEDLISW (879 aa). Residues N78, N101, N114, N143, N167, N191, and N215 are each glycosylated (N-linked (GlcNAc...) asparagine). LRR repeat units follow at residues 120 to 143, 144 to 167, 168 to 192, 194 to 216, 217 to 240, 241 to 264, 266 to 287, 288 to 312, 313 to 336, 338 to 360, 361 to 384, 386 to 409, 412 to 434, 435 to 459, 460 to 483, 487 to 510, 511 to 534, and 535 to 557; these read LHFL…SIEN, LSHL…SIGN, LSRL…IGNL, HLTF…IGNL, SHLT…IGGL, SNLT…IGNL, QLIV…SFGN, LNQL…LLNL, TGLS…ITSL, NLMA…LFII, PSLT…NISS, SNLQ…ISKL, LQEL…IFSH, LKSL…ILPY, FKTL…SVSS, SQSI…LRTQ, HELG…LWTL, and PNLF…TKPE. 2 N-linked (GlcNAc...) asparagine glycosylation sites follow: N242 and N263. N-linked (GlcNAc...) asparagine glycosylation is found at N311 and N332. The N-linked (GlcNAc...) asparagine glycan is linked to N381. N477 carries an N-linked (GlcNAc...) asparagine glycan. N-linked (GlcNAc...) asparagine glycans are attached at residues N541, N544, N569, N593, N608, and N618. An LRR 19; degenerate repeat occupies 558–580; the sequence is PSMAYLLGSNNNFTGKIPSFICE. LRR repeat units follow at residues 581 to 605, 606 to 630, 632 to 652, 653 to 675, 677 to 698, 699 to 722, 765 to 789, 790 to 813, 815 to 837, and 839 to 862; these read LRSL…MENL, KSNL…IFES, RSLD…LRFF, SNLE…WLSS, QKLQ…QALF, PKLR…YFVE, LTIY…IGLL, KELH…IGNL, ALES…IGNL, and LLSY…QFLT. An N-linked (GlcNAc...) asparagine glycan is attached at N712. 4 N-linked (GlcNAc...) asparagine glycosylation sites follow: N796, N812, N836, and N844. Residues 911–931 form a helical membrane-spanning segment; it reads IAAAIGFGPGIAFGLMFGYIL. Over 932 to 957 the chain is Cytoplasmic; sequence VSYKPEWFMNPFGRNNRRRKRHTTTH.

It belongs to the RLP family.

The protein resides in the cell membrane. In Arabidopsis thaliana (Mouse-ear cress), this protein is Receptor-like protein 34.